The following is a 530-amino-acid chain: Glutamate--cysteine ligase (530 aa).

The protein belongs to the glutamate--cysteine ligase type 1 family. Type 1 subfamily.

The catalysed reaction is L-cysteine + L-glutamate + ATP = gamma-L-glutamyl-L-cysteine + ADP + phosphate + H(+). The protein operates within sulfur metabolism; glutathione biosynthesis; glutathione from L-cysteine and L-glutamate: step 1/2. This is Glutamate--cysteine ligase from Pseudomonas entomophila (strain L48).